The primary structure comprises 149 residues: HTH-type transcriptional regulator LrpB (149 aa).

Residues 3–64 form the HTH asnC-type domain; sequence IDSIDFQILQ…VVDELKMGFS (62 aa). Positions 22 to 41 form a DNA-binding region, H-T-H motif; it reads WKEIGEKIHMTGQAVGNRIK.

In terms of biological role, negative regulation of glyA transcription and kinB-dependent sporulation. This is HTH-type transcriptional regulator LrpB (lrpB) from Bacillus subtilis (strain 168).